We begin with the raw amino-acid sequence, 132 residues long: Insulin-like 3 (132 aa).

An N-terminal signal peptide occupies residues M1 to G24. 3 disulfide bridges follow: C36-C117, C48-C130, and C116-C121. Positions V61–H104 are cleaved as a propeptide — c peptide like.

Belongs to the insulin family. Heterodimer of a B chain and an A chain linked by two disulfide bonds. As to expression, more strongly expressed in testis than in ovary.

It localises to the secreted. Its function is as follows. Seems to play a role in testicular function. May be a trophic hormone with a role in testicular descent in fetal life. Is a ligand for LGR8 receptor. The protein is Insulin-like 3 (INSL3) of Canis lupus familiaris (Dog).